A 382-amino-acid chain; its full sequence is Acetylornithine deacetylase (382 aa).

His79 serves as a coordination point for Zn(2+). Residue Asp81 is part of the active site. Asp111 serves as a coordination point for Zn(2+). The active site involves Glu143. Zn(2+) is bound by residues Glu144, Glu168, and His354.

Belongs to the peptidase M20A family. ArgE subfamily. As to quaternary structure, homodimer. Zn(2+) is required as a cofactor. It depends on Co(2+) as a cofactor. Glutathione serves as cofactor.

Its subcellular location is the cytoplasm. It carries out the reaction N(2)-acetyl-L-ornithine + H2O = L-ornithine + acetate. It participates in amino-acid biosynthesis; L-arginine biosynthesis; L-ornithine from N(2)-acetyl-L-ornithine (linear): step 1/1. Its function is as follows. Catalyzes the hydrolysis of the amide bond of N(2)-acetylated L-amino acids. Cleaves the acetyl group from N-acetyl-L-ornithine to form L-ornithine, an intermediate in L-arginine biosynthesis pathway, and a branchpoint in the synthesis of polyamines. The protein is Acetylornithine deacetylase of Pasteurella multocida (strain Pm70).